Reading from the N-terminus, the 466-residue chain is L-seryl-tRNA(Sec) selenium transferase (466 aa).

Lysine 294 is modified (N6-(pyridoxal phosphate)lysine).

Belongs to the SelA family. It depends on pyridoxal 5'-phosphate as a cofactor.

It localises to the cytoplasm. The enzyme catalyses L-seryl-tRNA(Sec) + selenophosphate + H(+) = L-selenocysteinyl-tRNA(Sec) + phosphate. It participates in aminoacyl-tRNA biosynthesis; selenocysteinyl-tRNA(Sec) biosynthesis; selenocysteinyl-tRNA(Sec) from L-seryl-tRNA(Sec) (bacterial route): step 1/1. Its function is as follows. Converts seryl-tRNA(Sec) to selenocysteinyl-tRNA(Sec) required for selenoprotein biosynthesis. This Carboxydothermus hydrogenoformans (strain ATCC BAA-161 / DSM 6008 / Z-2901) protein is L-seryl-tRNA(Sec) selenium transferase.